Here is an 843-residue protein sequence, read N- to C-terminus: Protein P (843 aa).

Positions 1–177 (MPLSYQHFRK…FCGSPYSWEQ (177 aa)) are terminal protein domain (TP). Positions 178–346 (DLQHGRLVFQ…YCLSHIVNLI (169 aa)) are spacer. Positions 219 to 269 (RKSRLGPQPAQGQLAGRQQGGSGSIRARVHPSPWGTVGVEPSGSGPTHNCA) are disordered. Positions 223-235 (LGPQPAQGQLAGR) are enriched in low complexity. The polymerase/reverse transcriptase domain (RT) stretch occupies residues 347–690 (EDWGPCTEHG…YLNLYPVARQ (344 aa)). Residues 357 to 600 (EHRIRTPRTP…YSLNFMGYVI (244 aa)) enclose the Reverse transcriptase domain. Positions 429, 551, and 552 each coordinate Mg(2+).

It belongs to the hepadnaviridae P protein family.

It carries out the reaction DNA(n) + a 2'-deoxyribonucleoside 5'-triphosphate = DNA(n+1) + diphosphate. The enzyme catalyses Endonucleolytic cleavage to 5'-phosphomonoester.. Its activity is regulated as follows. Activated by host HSP70 and HSP40 in vitro to be able to bind the epsilon loop of the pgRNA. Because deletion of the RNase H region renders the protein partly chaperone-independent, the chaperones may be needed indirectly to relieve occlusion of the RNA-binding site by this domain. Inhibited by several reverse-transcriptase inhibitors: Lamivudine, Adefovir and Entecavir. In terms of biological role, multifunctional enzyme that converts the viral RNA genome into dsDNA in viral cytoplasmic capsids. This enzyme displays a DNA polymerase activity that can copy either DNA or RNA templates, and a ribonuclease H (RNase H) activity that cleaves the RNA strand of RNA-DNA heteroduplexes in a partially processive 3'- to 5'-endonucleasic mode. Neo-synthesized pregenomic RNA (pgRNA) are encapsidated together with the P protein, and reverse-transcribed inside the nucleocapsid. Initiation of reverse-transcription occurs first by binding the epsilon loop on the pgRNA genome, and is initiated by protein priming, thereby the 5'-end of (-)DNA is covalently linked to P protein. Partial (+)DNA is synthesized from the (-)DNA template and generates the relaxed circular DNA (RC-DNA) genome. After budding and infection, the RC-DNA migrates in the nucleus, and is converted into a plasmid-like covalently closed circular DNA (cccDNA). The activity of P protein does not seem to be necessary for cccDNA generation, and is presumably released from (+)DNA by host nuclear DNA repair machinery. The sequence is that of Protein P from Hepatitis B virus genotype B2 subtype adw (isolate China/patient4/1996) (HBV-B).